We begin with the raw amino-acid sequence, 537 residues long: MVVVRRLRQSLVDEYGKEIYSLLKSFADVIGYSFEDEEEIKIEFNPDRPDLFSIPTLVGAAKIFYYNEPIVRSLFQASEIEVAISEGVSFIRPYFAGFVAEGPSIGSKLDDLIDYQEIIHQTVGKERKKVSIGIHDLDKTEPPFRYTTISKLERMKTYDSFEGTIEDVLQKHPKGMAYSSLLPDSRRVPAILDKNGGILSVPPIVNGIMTKIEPETRKFFVDITGMDSNSVKYAFYLLANFFQSSKYRISLPKIKGSYGPSKKEILDFNFRPYRLNLKYVSRYLGDKVSEENVILNLRKMGYVAEPGYPEVMVYVPGFRVDVMGLVDIIEDFIKSYGIENVREQYVSPGTIGSPNIFNEIKEKIRDVVVGLGFQEVMTFVLTGKYYQEDFQGEVRIENPKSEDYSVIRDRLYLNLLDLLARNKKHPLPQRIFEIGDVIVHGKQETHLCVMVEDNRSGVSTSKSILTSFLKRFSDHESKISGKKIYGCIEGRSGEIFLSGKSIGVIGEVHPSTLENFGLVNPISFFEINIQELIDQHQ.

Residues Phe-268 to Glu-343 form the B5 domain. Residues Asp-321, Asp-327, Glu-330, and Asp-331 each contribute to the Mg(2+) site.

This sequence belongs to the phenylalanyl-tRNA synthetase beta subunit family. Type 2 subfamily. Tetramer of two alpha and two beta subunits. Requires Mg(2+) as cofactor.

The protein localises to the cytoplasm. The catalysed reaction is tRNA(Phe) + L-phenylalanine + ATP = L-phenylalanyl-tRNA(Phe) + AMP + diphosphate + H(+). The sequence is that of Phenylalanine--tRNA ligase beta subunit from Thermoplasma volcanium (strain ATCC 51530 / DSM 4299 / JCM 9571 / NBRC 15438 / GSS1).